We begin with the raw amino-acid sequence, 177 residues long: MSRIGKKPVAIPTGVTANIADGVLSVKGPKGELSMPLSSEVTYSLEDGQLSVQPVNDTKRARSFWGMQRTLVQNLIDGVTQGYSKTLQITGVGYRAASQGKTLKLQLGYSHDIDFAIPEGITIQTPEPTTVNISGIDKQKVGQVAAEIRRWRRPEPYKGKGIKYAGEFIFRKEGKKK.

It belongs to the universal ribosomal protein uL6 family. As to quaternary structure, part of the 50S ribosomal subunit.

Its function is as follows. This protein binds to the 23S rRNA, and is important in its secondary structure. It is located near the subunit interface in the base of the L7/L12 stalk, and near the tRNA binding site of the peptidyltransferase center. The polypeptide is Large ribosomal subunit protein uL6 (Zymomonas mobilis subsp. mobilis (strain ATCC 31821 / ZM4 / CP4)).